A 317-amino-acid chain; its full sequence is MKVLWAALLVTFLAGCQAKVEQAVETEPEPELHQQAEWQSGQRWELALGRFWDYLRWVQTLSEQVQEELLSSQVTQELTALMDETMKELKAYKSELEEQLTPVAEETRARLSKELQAAQARLGADMEDVRGRLAQYRGEVQAMLGQSTEELRARLASHLRKLRKRLLRDADDLQKRLAVYQAGAREGAERGVSAIRERLGPLVEQGRVRAATVGSLAGQPLQERAQAWGERLRARMEEMGSRTRDRLDEVKEQVAEVRAKLEEQAQQIRLQAEAFQARLKSWFEPLVEDMQRQWAGLVEKVQAAMGTSAAPVPSDNH.

A signal peptide spans methionine 1–alanine 18. 8 tandem repeats follow at residues alanine 80 to threonine 101, proline 102 to glycine 123, alanine 124 to glycine 145, glutamine 146 to leucine 167, arginine 168 to glutamate 189, arginine 190 to alanine 211, threonine 212 to arginine 233, and alanine 234 to alanine 255. Positions alanine 80–alanine 255 are 8 X 22 AA approximate tandem repeats. Methionine 143 carries the methionine sulfoxide modification. Serine 147 bears the Phosphoserine mark. The LDL and other lipoprotein receptors binding stretch occupies residues histidine 158–arginine 168. Leucine 162–arginine 165 contributes to the heparin binding site. Residues alanine 210 to methionine 290 are lipid-binding and lipoprotein association. Glycine 229–methionine 236 contacts heparin. Positions glutamine 266–histidine 317 are homooligomerization. A specificity for association with VLDL region spans residues arginine 278–methionine 290.

It belongs to the apolipoprotein A1/A4/E family. In terms of assembly, homotetramer. May interact with ABCA1; functionally associated with ABCA1 in the biogenesis of HDLs. May interact with APP/A4 amyloid-beta peptide; the interaction is extremely stable in vitro but its physiological significance is unclear. May interact with MAPT. May interact with MAP2. In the cerebrospinal fluid, interacts with secreted SORL1. Interacts with PMEL; this allows the loading of PMEL luminal fragment on ILVs to induce fibril nucleation. In terms of processing, APOE exists as multiple glycosylated and sialylated glycoforms within cells and in plasma. The extent of glycosylation and sialylation are tissue and context specific. Glycated in plasma VLDL. Post-translationally, phosphorylated by FAM20C in the extracellular medium.

It is found in the secreted. Its subcellular location is the extracellular space. It localises to the extracellular matrix. The protein resides in the extracellular vesicle. The protein localises to the endosome. It is found in the multivesicular body. APOE is an apolipoprotein, a protein associating with lipid particles, that mainly functions in lipoprotein-mediated lipid transport between organs via the plasma and interstitial fluids. APOE is a core component of plasma lipoproteins and is involved in their production, conversion and clearance. Apolipoproteins are amphipathic molecules that interact both with lipids of the lipoprotein particle core and the aqueous environment of the plasma. As such, APOE associates with chylomicrons, chylomicron remnants, very low density lipoproteins (VLDL) and intermediate density lipoproteins (IDL) but shows a preferential binding to high-density lipoproteins (HDL). It also binds a wide range of cellular receptors including the LDL receptor/LDLR, the LDL receptor-related proteins LRP1, LRP2 and LRP8 and the very low-density lipoprotein receptor/VLDLR that mediate the cellular uptake of the APOE-containing lipoprotein particles. Finally, APOE also has a heparin-binding activity and binds heparan-sulfate proteoglycans on the surface of cells, a property that supports the capture and the receptor-mediated uptake of APOE-containing lipoproteins by cells. A main function of APOE is to mediate lipoprotein clearance through the uptake of chylomicrons, VLDLs, and HDLs by hepatocytes. APOE is also involved in the biosynthesis by the liver of VLDLs as well as their uptake by peripheral tissues ensuring the delivery of triglycerides and energy storage in muscle, heart and adipose tissues. By participating in the lipoprotein-mediated distribution of lipids among tissues, APOE plays a critical role in plasma and tissues lipid homeostasis. APOE is also involved in two steps of reverse cholesterol transport, the HDLs-mediated transport of cholesterol from peripheral tissues to the liver, and thereby plays an important role in cholesterol homeostasis. First, it is functionally associated with ABCA1 in the biogenesis of HDLs in tissues. Second, it is enriched in circulating HDLs and mediates their uptake by hepatocytes. APOE also plays an important role in lipid transport in the central nervous system, regulating neuron survival and sprouting. This is Apolipoprotein E (APOE) from Gorilla gorilla gorilla (Western lowland gorilla).